We begin with the raw amino-acid sequence, 130 residues long: Small ribosomal subunit protein uS11 (130 aa).

It belongs to the universal ribosomal protein uS11 family. Part of the 30S ribosomal subunit. Interacts with proteins S7 and S18. Binds to IF-3.

Functionally, located on the platform of the 30S subunit, it bridges several disparate RNA helices of the 16S rRNA. Forms part of the Shine-Dalgarno cleft in the 70S ribosome. The chain is Small ribosomal subunit protein uS11 from Shewanella frigidimarina (strain NCIMB 400).